Here is an 847-residue protein sequence, read N- to C-terminus: Mitogen-activated protein kinase kinase kinase 11 (847 aa).

S11 carries the post-translational modification Phosphoserine. Residues 11 to 38 (SPLGSWNGSGSGGGGGGGGGRPEGSPKA) form a disordered region. The span at 17–32 (NGSGSGGGGGGGGGRP) shows a compositional bias: gly residues. S35 carries the post-translational modification Phosphoserine. An SH3 domain is found at 41–105 (YANPVWTALF…PSNYVSRGGG (65 aa)). One can recognise a Protein kinase domain in the interval 117–379 (LRLEEVIGIG…ASILQQLEAL (263 aa)). Residues 123 to 131 (IGIGGFGKV) and K144 contribute to the ATP site. Catalysis depends on D241, which acts as the Proton acceptor. A Phosphothreonine; by autocatalysis modification is found at T277. S281 is modified (phosphoserine; by autocatalysis and MAP4K1). The residue at position 394 (S394) is a Phosphoserine. Leucine-zipper stretches follow at residues 403–424 (IQGLFDELRAKEKELLSREEEL) and 438–459 (LRRREHLLAQWELEVFERELTL). A phosphoserine mark is found at S507, S524, S548, S555, and S556. The disordered stretch occupies residues 537–643 (PAEPGQAWGR…SSGTPKLIQR (107 aa)). A compositionally biased stretch (basic and acidic residues) spans 550–562 (RRLEDSSNGERRA). Low complexity predominate over residues 597–609 (SSPLGSPSTPPAL). A phosphoserine mark is found at S654, S693, and S705. Residues 655 to 847 (LGLGRDLQPP…QAPWVPEAGP (193 aa)) are disordered. The segment covering 676–694 (TTPPTPTPAPCPTEPPPSP) has biased composition (pro residues). At T708 the chain carries Phosphothreonine. Phosphoserine is present on residues S724, S727, S740, S748, S758, S770, S789, S793, and S815. Residues 760-773 (PLGLISRPRPSPLR) are compositionally biased toward low complexity. Pro residues predominate over residues 787-799 (RPSPLPSPQPAPR). Residues 800-816 (RAPWTLFPDSDPFWDSP) are compositionally biased toward low complexity.

This sequence belongs to the protein kinase superfamily. STE Ser/Thr protein kinase family. MAP kinase kinase kinase subfamily. As to quaternary structure, homodimer; undergoes dimerization during activation. Interacts with MAP2K4/MKK4. Interacts with MAP2K7/MKK7. Found in a complex with SH3RF1, RAC1, MAP2K7/MKK7, MAPK8IP1/JIP1 and MAPK8/JNK1. Mg(2+) serves as cofactor. In terms of processing, autophosphorylation on serine and threonine residues within the activation loop plays a role in enzyme activation. Thr-277 is likely to be the main autophosphorylation site. Phosphorylation of Ser-555 and Ser-556 is induced by CDC42. In terms of tissue distribution, expressed in a wide variety of normal and neoplastic tissues including fetal lung, liver, heart and kidney, and adult lung, liver, heart, kidney, placenta, skeletal muscle, pancreas and brain.

Its subcellular location is the cytoplasm. It is found in the cytoskeleton. It localises to the microtubule organizing center. The protein localises to the centrosome. It carries out the reaction L-seryl-[protein] + ATP = O-phospho-L-seryl-[protein] + ADP + H(+). The catalysed reaction is L-threonyl-[protein] + ATP = O-phospho-L-threonyl-[protein] + ADP + H(+). Its activity is regulated as follows. Homodimerization via the leucine zipper domains is required for autophosphorylation and subsequent activation. Its function is as follows. Activates the JUN N-terminal pathway. Required for serum-stimulated cell proliferation and for mitogen and cytokine activation of MAPK14 (p38), MAPK3 (ERK) and MAPK8 (JNK1) through phosphorylation and activation of MAP2K4/MKK4 and MAP2K7/MKK7. Plays a role in mitogen-stimulated phosphorylation and activation of BRAF, but does not phosphorylate BRAF directly. Influences microtubule organization during the cell cycle. This chain is Mitogen-activated protein kinase kinase kinase 11, found in Homo sapiens (Human).